Consider the following 269-residue polypeptide: Meiotic drive suppressor wtf5 (269 aa).

Residues 1 to 65 form a disordered region; that stretch reads MKNNYTSLKS…NTHRENHSYG (65 aa). Basic and acidic residues predominate over residues 19–30; the sequence is KTDHEIDLEKGP. 3 helical membrane passes run 73-95, 110-132, and 206-228; these read LLII…VCYL, WTLF…YFYE, and WGLK…VFIA.

The protein belongs to the WTF family. Homomer. Interacts with other proteins that exhibit high sequence similarity.

It is found in the spore membrane. The protein resides in the vacuole membrane. Functionally, acts as a suppressor component of the dual wtf meiotic drive system, and can suppress but not confer meiotic drive by compatible poisons. Wtf meiotic drive systems promote unequal transmission of alleles from the parental zygote to progeny spores by encoding a poison and an antidote from the same locus; the poison is trans-acting and forms toxic aggregates in all spores within an ascus, wherease the antidote is spore-specific and targets aggregates for degradation by the vacuole. Meiotic drive by wtf systems therefore lead to poisoning of all progeny that do not inherit the dual poison/antidote allele, or express a compatible antidote. This is Meiotic drive suppressor wtf5 from Schizosaccharomyces pombe (strain 972 / ATCC 24843) (Fission yeast).